A 61-amino-acid chain; its full sequence is Peroxidase 1 (61 aa).

The interval 1 to 32 (DNTAKEKDSPANLSLRTCAAGDNAEQPLDPSR) is disordered. A glycan (N-linked (GlcNAc...) asparagine) is linked at Asn-12. Residues Asp-29, Ser-31, and Asp-36 each contribute to the Ca(2+) site.

The protein belongs to the peroxidase family. Classical plant (class III) peroxidase subfamily. It depends on Ca(2+) as a cofactor. The cofactor is heme b.

The protein resides in the secreted. The enzyme catalyses 2 a phenolic donor + H2O2 = 2 a phenolic radical donor + 2 H2O. Its function is as follows. Removal of H(2)O(2), oxidation of toxic reductants, biosynthesis and degradation of lignin, suberization, auxin catabolism, response to environmental stresses such as wounding, pathogen attack and oxidative stress. These functions might be dependent on each isozyme/isoform in each plant tissue. The sequence is that of Peroxidase 1 from Vitis rotundifolia (Muscadine grape).